A 103-amino-acid chain; its full sequence is MAVKERVGTVVSDKMEKTVVVAVESRFPHPIYQKTVSRTTRYKAHDEDNSCRVGDRVRITETRPMSRHKRWAIAEVLSHSPKADKSAGSTAPAPEAAAKEVSE.

Residues 78–103 (SHSPKADKSAGSTAPAPEAAAKEVSE) are disordered.

Belongs to the universal ribosomal protein uS17 family. As to quaternary structure, part of the 30S ribosomal subunit.

Its function is as follows. One of the primary rRNA binding proteins, it binds specifically to the 5'-end of 16S ribosomal RNA. This Parasynechococcus marenigrum (strain WH8102) protein is Small ribosomal subunit protein uS17.